Here is a 304-residue protein sequence, read N- to C-terminus: Peptidyl-prolyl cis-trans isomerase FKBP35 (304 aa).

The 90-residue stretch at 37–126 (GNEVTVHYVG…LFEIELLSFR (90 aa)) folds into the PPIase FKBP-type domain. TPR repeat units follow at residues 144-177 (AFDI…FIHT), 194-227 (ISCN…DKNN), and 228-261 (VKAL…NPNN).

Belongs to the FKBP-type PPIase family. As to quaternary structure, homodimer. Interacts (via TPR repeats) with HSP90 (probably via MEEVD motif).

Its subcellular location is the cytoplasm. The protein localises to the nucleus. The enzyme catalyses [protein]-peptidylproline (omega=180) = [protein]-peptidylproline (omega=0). With respect to regulation, inhibited by FK506 and its derivates, such as ascomycin, and rapamycin. FK506 and rapamycin inhibit peptidylprolyl isomerase activity but not chaperone activity. Inhibited by N-(2-ethyl-phenyl)-2-(3H-imidazao [4, 5-b] pyridin-2-yl-sulfanyl)-acetamide (D44). Not inhibited by cyclosporin A. Inhibition of calcineurin phosphatase activity is enhanced by FK506. Functionally, has peptidylprolyl isomerase (PPIase) and co-chaperone activities. Assists protein folding by catalyzing the peptidyl conversion of cis and trans rotamers of the prolyl amide bond of protein substrates. Inhibits calcineurin phosphatase activity in vitro. Plays an essential role in merozoite egress from host erythrocytes. This Plasmodium falciparum (isolate 3D7) protein is Peptidyl-prolyl cis-trans isomerase FKBP35.